A 137-amino-acid chain; its full sequence is Ribosome-binding factor A (137 aa).

It belongs to the RbfA family. As to quaternary structure, monomer. Binds 30S ribosomal subunits, but not 50S ribosomal subunits or 70S ribosomes.

The protein localises to the cytoplasm. Functionally, one of several proteins that assist in the late maturation steps of the functional core of the 30S ribosomal subunit. Associates with free 30S ribosomal subunits (but not with 30S subunits that are part of 70S ribosomes or polysomes). Required for efficient processing of 16S rRNA. May interact with the 5'-terminal helix region of 16S rRNA. The polypeptide is Ribosome-binding factor A (Erwinia tasmaniensis (strain DSM 17950 / CFBP 7177 / CIP 109463 / NCPPB 4357 / Et1/99)).